A 146-amino-acid chain; its full sequence is Bifunctional adenosine 5'-phosphosulfate phosphorylase/adenylylsulfatase HINT4 (146 aa).

Residues 9–120 (IFCEIVRNPT…YVPRWKAIKY (112 aa)) form the HIT domain. The Histidine triad motif signature appears at 101–105 (HLHLH). His105 acts as the Tele-AMP-histidine intermediate in catalysis.

In terms of assembly, homodimer.

The protein localises to the peroxisome. The enzyme catalyses sulfate + ADP + H(+) = adenosine 5'-phosphosulfate + phosphate. It carries out the reaction adenosine 5'-phosphosulfate + H2O = sulfate + AMP + 2 H(+). Its activity is regulated as follows. The adenosine 5'-phosphosulfate phosphorylase activity is enhanced at low pH. Functionally, possesses adenylylsulfatase activity in vitro, releasing AMP and sulfate from adenylyl sulfate. Also possesses adenosine 5'-phosphosulfate (APS) phosphorylase activity in vitro. Catalyzes the phosphorolysis of APS, leading to ADP and sulfate. The chain is Bifunctional adenosine 5'-phosphosulfate phosphorylase/adenylylsulfatase HINT4 from Arabidopsis thaliana (Mouse-ear cress).